The sequence spans 347 residues: Protein YIPF1 homolog (347 aa).

A disordered region spans residues 1-115 (MSNYNNKHHD…FSDNVPLNTN (115 aa)). The Cytoplasmic segment spans residues 1–166 (MSNYNNKHHD…FFNLIRENPD (166 aa)). Over residues 34-47 (NLFPNTNIDYNDYT) the composition is skewed to polar residues. Low complexity-rich tracts occupy residues 48-67 (QNRG…LQFQ) and 76-104 (NSNT…SSNN). Residues 105–115 (KFSDNVPLNTN) are compositionally biased toward polar residues. The chain crosses the membrane as a helical span at residues 167-187 (LYGPFWVLTSLVFIVAVTSNL). The Lumenal segment spans residues 188-207 (NEYFHSSDHKSWEVDIQKIV). A helical membrane pass occupies residues 208 to 228 (YSAITIYGYSFVIPLILWGIF). At 229–232 (KWMN) the chain is on the cytoplasmic side. Residues 233–253 (LGLRLLDMLCIYGYTLFIFVP) form a helical membrane-spanning segment. Residues 254–255 (AS) lie on the Lumenal side of the membrane. A helical transmembrane segment spans residues 256–276 (ILCVIPLQLVQWIIVAIASIV). The Cytoplasmic segment spans residues 277–296 (SGLFLVTNIFTPLKEDFTKR). The helical transmembrane segment at 297–317 (GLIICAVIGALHIGLALVLKL) threads the bilayer. The Lumenal segment spans residues 318–347 (YFFANSTENFTISDSSSTPTPTPTNTTKLL). N-linked (GlcNAc...) asparagine glycans are attached at residues Asn322, Asn326, and Asn342.

This sequence belongs to the YIP1 family.

The protein resides in the golgi apparatus. The protein localises to the cis-Golgi network membrane. Its subcellular location is the trans-Golgi network membrane. It localises to the late endosome membrane. This chain is Protein YIPF1 homolog (yipf1), found in Dictyostelium discoideum (Social amoeba).